The chain runs to 894 residues: Sorting nexin-14 (894 aa).

The PXA domain maps to 78–252 (SSKVDASLSE…LLIIFIDDSP (175 aa)). In terms of domain architecture, RGS spans 284 to 416 (ELKQIREQQD…CHSDEYFRQL (133 aa)). At S496 the chain carries Phosphoserine. One can recognise a PX domain in the interval 518–638 (PYVDFFEDPS…DFLSPNGGET (121 aa)).

This sequence belongs to the sorting nexin family.

The protein resides in the cytoplasm. The protein localises to the cell projection. It localises to the dendrite. Its function is as follows. Plays a role in maintaining normal neuronal excitability and synaptic transmission. May be involved in several stages of intracellular trafficking. The protein is Sorting nexin-14 (SNX14) of Pongo abelii (Sumatran orangutan).